The following is a 792-amino-acid chain: LPS-assembly protein LptD (792 aa).

Residues 1–22 (MYRVLRLLPLPLSVAISLSALA) form the signal peptide.

This sequence belongs to the LptD family. As to quaternary structure, component of the lipopolysaccharide transport and assembly complex. Interacts with LptE and LptA.

The protein resides in the cell outer membrane. Its function is as follows. Together with LptE, is involved in the assembly of lipopolysaccharide (LPS) at the surface of the outer membrane. The polypeptide is LPS-assembly protein LptD (Xylella fastidiosa (strain 9a5c)).